The primary structure comprises 871 residues: DNA mismatch repair protein MutS (871 aa).

618–625 (GPNMSGKS) contributes to the ATP binding site.

Belongs to the DNA mismatch repair MutS family.

In terms of biological role, this protein is involved in the repair of mismatches in DNA. It is possible that it carries out the mismatch recognition step. This protein has a weak ATPase activity. The sequence is that of DNA mismatch repair protein MutS from Christiangramia forsetii (strain DSM 17595 / CGMCC 1.15422 / KT0803) (Gramella forsetii).